Here is a 207-residue protein sequence, read N- to C-terminus: Ribosomal RNA small subunit methyltransferase G (207 aa).

Residues Gly-76, Gln-81, 127-128, and Arg-141 each bind S-adenosyl-L-methionine; that span reads VE.

The protein belongs to the methyltransferase superfamily. RNA methyltransferase RsmG family.

Its subcellular location is the cytoplasm. The enzyme catalyses guanosine(527) in 16S rRNA + S-adenosyl-L-methionine = N(7)-methylguanosine(527) in 16S rRNA + S-adenosyl-L-homocysteine. Its function is as follows. Specifically methylates the N7 position of guanine in position 527 of 16S rRNA. This chain is Ribosomal RNA small subunit methyltransferase G, found in Neisseria meningitidis serogroup A / serotype 4A (strain DSM 15465 / Z2491).